Here is a 199-residue protein sequence, read N- to C-terminus: MANLDTLKAALEKVLGKRVQNLIEATGELTLIVKAADYLEVARLLRDDPSLRFEQLLDLCGVDYSDYAEGAWDGLRFAAVSQLLSVTHNWRLRLRVFAPDDDFPVLPSVINVWNSVNWFEREAFDFYGIVFEGHPDLRRILTDYGFVGHPFRKDFPVSGYVEMRYDPEQKRVIYQPVTIEPREVTPRVIREENYGGTQH.

The protein belongs to the complex I 30 kDa subunit family. As to quaternary structure, NDH-1 is composed of 14 different subunits. Subunits NuoB, C, D, E, F, and G constitute the peripheral sector of the complex.

The protein resides in the cell inner membrane. The catalysed reaction is a quinone + NADH + 5 H(+)(in) = a quinol + NAD(+) + 4 H(+)(out). In terms of biological role, NDH-1 shuttles electrons from NADH, via FMN and iron-sulfur (Fe-S) centers, to quinones in the respiratory chain. The immediate electron acceptor for the enzyme in this species is believed to be ubiquinone. Couples the redox reaction to proton translocation (for every two electrons transferred, four hydrogen ions are translocated across the cytoplasmic membrane), and thus conserves the redox energy in a proton gradient. The sequence is that of NADH-quinone oxidoreductase subunit C from Cupriavidus metallidurans (strain ATCC 43123 / DSM 2839 / NBRC 102507 / CH34) (Ralstonia metallidurans).